Consider the following 115-residue polypeptide: NADH-ubiquinone oxidoreductase chain 3 (115 aa).

The next 3 membrane-spanning stretches (helical) occupy residues 3–23 (LLIIITINITLSFILISIAFW), 55–75 (FFLVAITFLLFDLEIALLLPL), and 86–106 (TMMATAFILVTILALGLSYEW).

The protein belongs to the complex I subunit 3 family. As to quaternary structure, core subunit of respiratory chain NADH dehydrogenase (Complex I) which is composed of 45 different subunits. Interacts with TMEM186. Interacts with TMEM242.

It is found in the mitochondrion inner membrane. The catalysed reaction is a ubiquinone + NADH + 5 H(+)(in) = a ubiquinol + NAD(+) + 4 H(+)(out). Its function is as follows. Core subunit of the mitochondrial membrane respiratory chain NADH dehydrogenase (Complex I) which catalyzes electron transfer from NADH through the respiratory chain, using ubiquinone as an electron acceptor. Essential for the catalytic activity of complex I. In Rattus norvegicus (Rat), this protein is NADH-ubiquinone oxidoreductase chain 3.